A 405-amino-acid chain; its full sequence is MSVNKANSFRSGPDERGRFGIFGGRFVAETLMPLVLELDKAYAAAKADPAFQAEIDFMQRDYVGRPSPLYLAARLTEHFGGAKIYFKRDELNHTGSHKINNCLGQILLARRMGKTRIIAETGAGQHGVATATVCARFGLPCVIYMGTTDIERQKPNVFRMKLLGAEVVPVTSGTGTLKDAMNEALRDWVTNVENTYYLIGTVAGPHPYPAMVRDFQSVIGEETKKQMLEREGRLPDSLVACIGGGSNAMGLFHPFLDDPSVKIYGVEAAGHGLETGEHCASLKGGAPGVLHGNRTYLLQDDDGQIKDGHSISAGLDYPGIGPEHAWLHETGRAEYVSATDREALAAFQLCSKLEGIIPALEPAHALAFVTKIASALPKDHLMVMNMCGRGDKDVFAVADHLGVTL.

The residue at position 98 (Lys98) is an N6-(pyridoxal phosphate)lysine.

Belongs to the TrpB family. In terms of assembly, tetramer of two alpha and two beta chains. Pyridoxal 5'-phosphate is required as a cofactor.

It carries out the reaction (1S,2R)-1-C-(indol-3-yl)glycerol 3-phosphate + L-serine = D-glyceraldehyde 3-phosphate + L-tryptophan + H2O. The protein operates within amino-acid biosynthesis; L-tryptophan biosynthesis; L-tryptophan from chorismate: step 5/5. Functionally, the beta subunit is responsible for the synthesis of L-tryptophan from indole and L-serine. This Parvibaculum lavamentivorans (strain DS-1 / DSM 13023 / NCIMB 13966) protein is Tryptophan synthase beta chain.